A 638-amino-acid chain; its full sequence is Bromodomain-containing factor 2 (638 aa).

Residues 1-10 (MSRTNMDTRH) are compositionally biased toward basic and acidic residues. The disordered stretch occupies residues 1–54 (MSRTNMDTRHAHSALLAAPQSATANSRSSNSSSESSSNKNNINVGVGDDSGNVS). The segment covering 25–43 (NSRSSNSSSESSSNKNNIN) has biased composition (low complexity). Residues 130-239 (EAEELPPHQS…KYFEKKLSAM (110 aa)) form the Bromo 1 domain. Positions 250 to 306 (KKTSRNRKKNEDMDSPLVIRRSVSTTNDNIGESGNREGVSGGRPKRTIHPPKSKDLF) are disordered. Ser264 carries the post-translational modification Phosphoserine. Residues 271 to 281 (SVSTTNDNIGE) show a composition bias toward polar residues. Positions 317-426 (KTLQKKFRTC…ELFNFHWLEN (110 aa)) constitute a Bromo 2 domain. The interval 435-460 (TDSDLEEDNYSSSYSSDDEYDDEDIN) is disordered. Positions 450-460 (SDDEYDDEDIN) are enriched in acidic residues. A coiled-coil region spans residues 468–537 (AIQYLEQKLK…INELSDLEMN (70 aa)). The region spanning 506–590 (TLLRRKAMKH…EKKNNNNSKR (85 aa)) is the NET domain. Residues 586–638 (NNSKRKLSGNYSTAPTNKKKKTLKFLEKDEIINNNNYSDSEEDSSDSSDSDSD) are disordered. Positions 624–638 (DSEEDSSDSSDSDSD) are enriched in acidic residues.

Belongs to the BET family. Interacts with the TFIID subunit TAF7 and with histone H4. In terms of processing, phosphorylated by the casein kinase CK2 complex.

It localises to the cytoplasm. Its subcellular location is the nucleus. Its function is as follows. Transcription factor involved in the expression of a broad class of genes including snRNAs. Required for sporulation and DNA-damage repair. Prevents the spreading of SIR silencing at telomeres and protects histone H4, but not H3, from deacetylation. The chain is Bromodomain-containing factor 2 (BDF2) from Saccharomyces cerevisiae (strain ATCC 204508 / S288c) (Baker's yeast).